Here is a 376-residue protein sequence, read N- to C-terminus: Lipoyl synthase, mitochondrial (376 aa).

7 residues coordinate [4Fe-4S] cluster: C103, C108, C114, C134, C138, C141, and S349. The 220-residue stretch at 119–338 folds into the Radical SAM core domain; sequence EHGTQTATIM…EDRGNQLGFL (220 aa).

This sequence belongs to the radical SAM superfamily. Lipoyl synthase family. The cofactor is [4Fe-4S] cluster.

The protein localises to the mitochondrion. The enzyme catalyses [[Fe-S] cluster scaffold protein carrying a second [4Fe-4S](2+) cluster] + N(6)-octanoyl-L-lysyl-[protein] + 2 oxidized [2Fe-2S]-[ferredoxin] + 2 S-adenosyl-L-methionine + 4 H(+) = [[Fe-S] cluster scaffold protein] + N(6)-[(R)-dihydrolipoyl]-L-lysyl-[protein] + 4 Fe(3+) + 2 hydrogen sulfide + 2 5'-deoxyadenosine + 2 L-methionine + 2 reduced [2Fe-2S]-[ferredoxin]. It functions in the pathway protein modification; protein lipoylation via endogenous pathway; protein N(6)-(lipoyl)lysine from octanoyl-[acyl-carrier-protein]: step 2/2. Catalyzes the radical-mediated insertion of two sulfur atoms into the C-6 and C-8 positions of the octanoyl moiety bound to the lipoyl domains of lipoate-dependent enzymes, thereby converting the octanoylated domains into lipoylated derivatives. The polypeptide is Lipoyl synthase, mitochondrial (Drosophila ananassae (Fruit fly)).